The chain runs to 261 residues: uncharacterized protein (261 aa).

The protein belongs to the FrhB family.

This is an uncharacterized protein from Methanocaldococcus jannaschii (strain ATCC 43067 / DSM 2661 / JAL-1 / JCM 10045 / NBRC 100440) (Methanococcus jannaschii).